A 500-amino-acid polypeptide reads, in one-letter code: Replicase polyprotein 1ab (500 aa).

One can recognise a CoV Nsp1 globular domain in the interval 54–196; sequence LVNHVRVDCS…PWSILLRKGG (143 aa). The 149-residue stretch at 352–500 folds into the Peptidase C16 domain; sequence AFDAIYSETL…MCKCSFKAYF (149 aa). Cys-389 acts as the For PL1-PRO activity in catalysis. The C4-type zinc finger occupies 466–494; it reads CLKCGMELKLQGLDAVFFYGDVVSHMCKC.

Belongs to the coronaviruses polyprotein 1ab family.

The replicase polyprotein of coronaviruses is a multifunctional protein: it contains the activities necessary for the transcription of negative stranded RNA, leader RNA, subgenomic mRNAs and progeny virion RNA as well as proteinases responsible for the cleavage of the polyprotein into functional products. Its function is as follows. The papain-like proteinase 1 (PL1-PRO) is responsible for the cleavages located at the N-terminus of the replicase polyprotein. Activity of PL1-PRO is strongly dependent on zinc. Functionally, non-structural protein 1: binds to the 40S ribosomal subunit and inhibits host translation. The nsp1-40S ribosome complex further induces an endonucleolytic cleavage near the 5'UTR of host mRNAs, targeting them for degradation. By suppressing host gene expression, nsp1 facilitates efficient viral gene expression in infected cells and evasion from host immune response. The chain is Replicase polyprotein 1ab (rep) from Mus musculus (Mouse).